Here is a 661-residue protein sequence, read N- to C-terminus: Threonine--tRNA ligase (661 aa).

One can recognise a TGS domain in the interval 1-64 (MSHSVSLTFP…ADGKIEIVTR (64 aa)). The catalytic stretch occupies residues 245-547 (DHRRLGREMD…LLENYAGHMP (303 aa)). Zn(2+) contacts are provided by Cys341, His392, and His524.

It belongs to the class-II aminoacyl-tRNA synthetase family. In terms of assembly, homodimer. Zn(2+) is required as a cofactor.

It is found in the cytoplasm. The enzyme catalyses tRNA(Thr) + L-threonine + ATP = L-threonyl-tRNA(Thr) + AMP + diphosphate + H(+). Functionally, catalyzes the attachment of threonine to tRNA(Thr) in a two-step reaction: L-threonine is first activated by ATP to form Thr-AMP and then transferred to the acceptor end of tRNA(Thr). Also edits incorrectly charged L-seryl-tRNA(Thr). The sequence is that of Threonine--tRNA ligase from Sinorhizobium fredii (strain NBRC 101917 / NGR234).